We begin with the raw amino-acid sequence, 70 residues long: uncharacterized protein (70 aa).

The tract at residues L40–S70 is disordered. The span at S51–E61 shows a compositional bias: polar residues.

This is an uncharacterized protein from Bdellovibrio phage phiMH2K (Bacteriophage phiMH2K).